Consider the following 467-residue polypeptide: Cis-zeatin O-glucosyltransferase 1 (467 aa).

H21 (proton acceptor) is an active-site residue. Residues H21 and N91 each coordinate an anthocyanidin. D127 functions as the Charge relay in the catalytic mechanism. UDP-alpha-D-glucose is bound by residues A343, Q345, H360, W363, N364, S365, E368, D384, and Q385.

The protein belongs to the UDP-glycosyltransferase family. In terms of tissue distribution, highly expressed in root. Expressed at lower level in kernel and cob. Weakly expressed in leaves. Weakly or not expressed in stems.

It catalyses the reaction cis-zeatin + UDP-alpha-D-glucose = O-beta-D-glucosyl-cis-zeatin + UDP + H(+). Functionally, utilizes UDP-glucose as the sugar donor and catalyzes the formation of O-beta-D-glucosyl-cis-zeatin from cis-zeatin. May regulate active versus storage forms of cytokinins and could have an impact on seed growth. This is Cis-zeatin O-glucosyltransferase 1 (CISZOG1) from Zea mays (Maize).